A 1577-amino-acid chain; its full sequence is Pentafunctional AROM polypeptide (1577 aa).

Residues 1 to 392 (MASVGLEKVN…YGTSAHVVSD (392 aa)) are 3-dehydroquinate synthase. NAD(+)-binding positions include 80 to 83 (ETYK), 111 to 113 (GGV), and D116. R127 lines the 7-phospho-2-dehydro-3-deoxy-D-arabino-heptonate pocket. Residue 136–137 (TS) coordinates NAD(+). Residues D143 and K149 each coordinate 7-phospho-2-dehydro-3-deoxy-D-arabino-heptonate. K158 contributes to the NAD(+) binding site. N159 lines the 7-phospho-2-dehydro-3-deoxy-D-arabino-heptonate pocket. NAD(+)-binding positions include 176 to 179 (WLET) and N187. Position 191 (E191) interacts with Zn(2+). 7-phospho-2-dehydro-3-deoxy-D-arabino-heptonate-binding positions include 191-194 (EVIK) and K258. The Proton acceptor; for 3-dehydroquinate synthase activity role is filled by E268. 7-phospho-2-dehydro-3-deoxy-D-arabino-heptonate is bound by residues 272–276 (RNLLN) and H279. Residue H279 participates in Zn(2+) binding. The active-site Proton acceptor; for 3-dehydroquinate synthase activity is the H283. Residues H295 and K364 each contribute to the 7-phospho-2-dehydro-3-deoxy-D-arabino-heptonate site. H295 is a binding site for Zn(2+). Residues 405–863 (VYPFTDVRSS…WDVLHSRLGA (459 aa)) form an EPSP synthase region. Residue C845 is the For EPSP synthase activity of the active site. The interval 882 to 1071 (VVLIGMRAAG…VPVKRSTFVC (190 aa)) is shikimate kinase. Position 886-893 (886-893 (GMRAAGKS)) interacts with ATP. The segment at 1072 to 1284 (LTFQNLLPEM…AAPGQLTLRQ (213 aa)) is 3-dehydroquinase. The Proton acceptor; for 3-dehydroquinate dehydratase activity role is filled by H1189. The active-site Schiff-base intermediate with substrate; for 3-dehydroquinate dehydratase activity is K1218. A shikimate dehydrogenase region spans residues 1297–1577 (PKKMFVVGSP…APVYDAVTQE (281 aa)).

The protein in the N-terminal section; belongs to the sugar phosphate cyclases superfamily. Dehydroquinate synthase family. This sequence in the 2nd section; belongs to the EPSP synthase family. It in the 3rd section; belongs to the shikimate kinase family. In the 4th section; belongs to the type-I 3-dehydroquinase family. The protein in the C-terminal section; belongs to the shikimate dehydrogenase family. Homodimer. The cofactor is Zn(2+).

It localises to the cytoplasm. It carries out the reaction 7-phospho-2-dehydro-3-deoxy-D-arabino-heptonate = 3-dehydroquinate + phosphate. The catalysed reaction is 3-dehydroquinate = 3-dehydroshikimate + H2O. It catalyses the reaction shikimate + NADP(+) = 3-dehydroshikimate + NADPH + H(+). The enzyme catalyses shikimate + ATP = 3-phosphoshikimate + ADP + H(+). It carries out the reaction 3-phosphoshikimate + phosphoenolpyruvate = 5-O-(1-carboxyvinyl)-3-phosphoshikimate + phosphate. It functions in the pathway metabolic intermediate biosynthesis; chorismate biosynthesis; chorismate from D-erythrose 4-phosphate and phosphoenolpyruvate: step 2/7. Its pathway is metabolic intermediate biosynthesis; chorismate biosynthesis; chorismate from D-erythrose 4-phosphate and phosphoenolpyruvate: step 3/7. The protein operates within metabolic intermediate biosynthesis; chorismate biosynthesis; chorismate from D-erythrose 4-phosphate and phosphoenolpyruvate: step 4/7. It participates in metabolic intermediate biosynthesis; chorismate biosynthesis; chorismate from D-erythrose 4-phosphate and phosphoenolpyruvate: step 5/7. It functions in the pathway metabolic intermediate biosynthesis; chorismate biosynthesis; chorismate from D-erythrose 4-phosphate and phosphoenolpyruvate: step 6/7. In terms of biological role, the AROM polypeptide catalyzes 5 consecutive enzymatic reactions in prechorismate polyaromatic amino acid biosynthesis. In Eremothecium gossypii (strain ATCC 10895 / CBS 109.51 / FGSC 9923 / NRRL Y-1056) (Yeast), this protein is Pentafunctional AROM polypeptide.